We begin with the raw amino-acid sequence, 523 residues long: Acetyl-CoA hydrolase (523 aa).

Position 277–281 (277–281 (GIGNI)) interacts with CoA. The 5-glutamyl coenzyme A thioester intermediate role is filled by glutamate 302. Residues asparagine 392 and glycine 396 each contribute to the CoA site.

The protein belongs to the acetyl-CoA hydrolase/transferase family.

It is found in the cytoplasm. It catalyses the reaction acetyl-CoA + H2O = acetate + CoA + H(+). Its function is as follows. Presumably involved in regulating the intracellular acetyl-CoA pool for fatty acid and cholesterol synthesis and fatty acid oxidation. The chain is Acetyl-CoA hydrolase (ACH1) from Kluyveromyces lactis (strain ATCC 8585 / CBS 2359 / DSM 70799 / NBRC 1267 / NRRL Y-1140 / WM37) (Yeast).